The following is a 512-amino-acid chain: Cytochrome P450 monooxygenase adrA (512 aa).

A helical membrane pass occupies residues 12–32 (FEPVSLVGLVLLSGLFLLLTA). Residues asparagine 86, asparagine 149, and asparagine 210 are each glycosylated (N-linked (GlcNAc...) asparagine). Cysteine 453 contacts heme.

This sequence belongs to the cytochrome P450 family. Heme serves as cofactor.

It localises to the membrane. It participates in secondary metabolite biosynthesis; terpenoid biosynthesis. Its function is as follows. Cytochrome P450 monooxygenase; part of the gene cluster that mediates the biosynthesis of andrastins, meroterpenoid compounds that exhibit inhibitory activity against ras farnesyltransferase, suggesting that they could be promising leads for antitumor agents. The first step of the pathway is the synthesis of 3,5-dimethylorsellinic acid (DMOA) by the polyketide synthase adrD via condensation of one acetyl-CoA starter unit with 3 malonyl-CoA units and 2 methylations. DMAO is then converted to farnesyl-DMAO by the prenyltransferase adrG. The methyltransferase adrK catalyzes the methylation of the carboxyl group of farnesyl-DMAO to farnesyl-DMAO methyl ester which is further converted to epoxyfarnesyl-DMAO methyl ester by the FAD-dependent monooxygenase adrH. The terpene cyclase adrI then catalyzes the carbon skeletal rearrangement to generate the andrastin E, the first compound in the pathway having the andrastin scaffold, with the tetracyclic ring system. The post-cyclization tailoring enzymes adrF, adrE, adrJ, and adrA, are involved in the conversion of andrastin E into andrastin A. The short chain dehydrogenase adrF is responsible for the oxidation of the C-3 a hydroxyl group of andrastin E to yield the corresponding ketone, andrastin D. The ketoreductase adrE stereoselectively reduces the carbonyl moiety to reverse the stereochemistry of the C-3 position to yield andrastin F. The acetyltransferase adrJ is the acetyltransferase that attaches the acetyl group to the C-3 hydroxyl group of andrastin F to yield andrastin C. Finally, the cytochrome P450 monooxygenase adrA catalyzes two sequential oxidation reactions of the C-23 methyl group, to generate the corresponding alcohol andrastin B, and aldehyde andrastin A. This chain is Cytochrome P450 monooxygenase adrA, found in Penicillium rubens (strain ATCC 28089 / DSM 1075 / NRRL 1951 / Wisconsin 54-1255) (Penicillium chrysogenum).